Reading from the N-terminus, the 228-residue chain is 7-cyano-7-deazaguanine synthase (228 aa).

13 to 23 is an ATP binding site; sequence LSGGMDSTLSS. Cys-192, Cys-200, Cys-203, and Cys-206 together coordinate Zn(2+).

This sequence belongs to the QueC family. Zn(2+) is required as a cofactor.

The catalysed reaction is 7-carboxy-7-deazaguanine + NH4(+) + ATP = 7-cyano-7-deazaguanine + ADP + phosphate + H2O + H(+). Its pathway is purine metabolism; 7-cyano-7-deazaguanine biosynthesis. Catalyzes the ATP-dependent conversion of 7-carboxy-7-deazaguanine (CDG) to 7-cyano-7-deazaguanine (preQ(0)). The polypeptide is 7-cyano-7-deazaguanine synthase (Aliarcobacter butzleri (strain RM4018) (Arcobacter butzleri)).